Reading from the N-terminus, the 349-residue chain is Histidinol-phosphate aminotransferase (349 aa).

Lys-206 is modified (N6-(pyridoxal phosphate)lysine).

It belongs to the class-II pyridoxal-phosphate-dependent aminotransferase family. Histidinol-phosphate aminotransferase subfamily. Homodimer. Pyridoxal 5'-phosphate is required as a cofactor.

The catalysed reaction is L-histidinol phosphate + 2-oxoglutarate = 3-(imidazol-4-yl)-2-oxopropyl phosphate + L-glutamate. It participates in amino-acid biosynthesis; L-histidine biosynthesis; L-histidine from 5-phospho-alpha-D-ribose 1-diphosphate: step 7/9. This Hydrogenobaculum sp. (strain Y04AAS1) protein is Histidinol-phosphate aminotransferase.